The primary structure comprises 839 residues: Lon protease (839 aa).

A Lon N-terminal domain is found at 31–224 (LFLIPIKSRP…KVLLFLKKEI (194 aa)). 377–384 (GPPGVGKT) serves as a coordination point for ATP. In terms of domain architecture, Lon proteolytic spans 613 to 790 (ASVPGTALGL…EEVALLLFDE (178 aa)). Residues Ser696 and Lys739 contribute to the active site. The tract at residues 807-839 (IVNPTRKLSPKKKTTQKQKLSLSKQKGNNQKKK) is disordered. Positions 823-832 (KQKLSLSKQK) are enriched in low complexity.

It belongs to the peptidase S16 family. Homohexamer. Organized in a ring with a central cavity.

The protein localises to the cytoplasm. It carries out the reaction Hydrolysis of proteins in presence of ATP.. ATP-dependent serine protease that mediates the selective degradation of mutant and abnormal proteins as well as certain short-lived regulatory proteins. Required for cellular homeostasis and for survival from DNA damage and developmental changes induced by stress. Degrades polypeptides processively to yield small peptide fragments that are 5 to 10 amino acids long. Binds to DNA in a double-stranded, site-specific manner. The chain is Lon protease from Leptospira interrogans serogroup Icterohaemorrhagiae serovar copenhageni (strain Fiocruz L1-130).